Here is a 67-residue protein sequence, read N- to C-terminus: ATP synthase F(0) complex subunit 8 (67 aa).

The chain crosses the membrane as a helical span at residues 8-24 (TWFITITSMIMTLFILF). An N6-acetyllysine; alternate modification is found at lysine 54. N6-succinyllysine; alternate is present on lysine 54. Lysine 57 bears the N6-acetyllysine mark.

The protein belongs to the ATPase protein 8 family. Component of the ATP synthase complex composed at least of ATP5F1A/subunit alpha, ATP5F1B/subunit beta, ATP5MC1/subunit c (homooctomer), MT-ATP6/subunit a, MT-ATP8/subunit 8, ATP5ME/subunit e, ATP5MF/subunit f, ATP5MG/subunit g, ATP5MK/subunit k, ATP5MJ/subunit j, ATP5F1C/subunit gamma, ATP5F1D/subunit delta, ATP5F1E/subunit epsilon, ATP5PF/subunit F6, ATP5PB/subunit b, ATP5PD/subunit d, ATP5PO/subunit OSCP. ATP synthase complex consists of a soluble F(1) head domain (subunits alpha(3) and beta(3)) - the catalytic core - and a membrane F(0) domain - the membrane proton channel (subunits c, a, 8, e, f, g, k and j). These two domains are linked by a central stalk (subunits gamma, delta, and epsilon) rotating inside the F1 region and a stationary peripheral stalk (subunits F6, b, d, and OSCP). Interacts with PRICKLE3.

The protein localises to the mitochondrion membrane. Its function is as follows. Subunit 8, of the mitochondrial membrane ATP synthase complex (F(1)F(0) ATP synthase or Complex V) that produces ATP from ADP in the presence of a proton gradient across the membrane which is generated by electron transport complexes of the respiratory chain. ATP synthase complex consist of a soluble F(1) head domain - the catalytic core - and a membrane F(1) domain - the membrane proton channel. These two domains are linked by a central stalk rotating inside the F(1) region and a stationary peripheral stalk. During catalysis, ATP synthesis in the catalytic domain of F(1) is coupled via a rotary mechanism of the central stalk subunits to proton translocation. In vivo, can only synthesize ATP although its ATP hydrolase activity can be activated artificially in vitro. Part of the complex F(0) domain. This Sus scrofa (Pig) protein is ATP synthase F(0) complex subunit 8.